Here is a 392-residue protein sequence, read N- to C-terminus: Casein kinase II subunit alpha (392 aa).

Residues 39–324 (YQLVRKLGRG…AREAMDHPYF (286 aa)) enclose the Protein kinase domain. ATP contacts are provided by residues 45-53 (LGRGKYSEV) and lysine 68. Aspartate 156 (proton acceptor) is an active-site residue. Positions 334-355 (MGGSNMPSGSSTPVSSASMMSG) are disordered. Over residues 337–354 (SNMPSGSSTPVSSASMMS) the composition is skewed to low complexity.

The protein belongs to the protein kinase superfamily. Ser/Thr protein kinase family. CK2 subfamily. Tetramer composed of an alpha chain, an alpha' and two beta chains.

The protein resides in the nucleus. The catalysed reaction is L-seryl-[protein] + ATP = O-phospho-L-seryl-[protein] + ADP + H(+). The enzyme catalyses L-threonyl-[protein] + ATP = O-phospho-L-threonyl-[protein] + ADP + H(+). In terms of biological role, catalytic subunit of a constitutively active serine/threonine-protein kinase complex that phosphorylates a large number of substrates containing acidic residues C-terminal to the phosphorylated serine or threonine. Regulates numerous cellular processes, such as cell cycle progression, apoptosis and transcription, as well as viral infection. May act as a regulatory node which integrates and coordinates numerous signals leading to an appropriate cellular response. During mitosis, functions as a component of the p53/TP53-dependent spindle assembly checkpoint (SAC) that maintains cyclin-B-CDK1 activity and G2 arrest in response to spindle damage. Can also negatively regulate apoptosis. Phosphorylates the caspases CASP9 and CASP2 and the apoptotic regulator NOL3. Phosphorylation protects CASP9 from cleavage and activation by CASP8, and inhibits the dimerization of CASP2 and activation of CASP8. Plays an important role in the circadian clock function by phosphorylating BMAL1. This Xenopus laevis (African clawed frog) protein is Casein kinase II subunit alpha (csnk2a1).